The sequence spans 351 residues: N-acetyl-gamma-glutamyl-phosphate reductase (351 aa).

Cysteine 154 is a catalytic residue.

The protein belongs to the NAGSA dehydrogenase family. Type 1 subfamily.

It is found in the cytoplasm. It carries out the reaction N-acetyl-L-glutamate 5-semialdehyde + phosphate + NADP(+) = N-acetyl-L-glutamyl 5-phosphate + NADPH + H(+). Its pathway is amino-acid biosynthesis; L-arginine biosynthesis; N(2)-acetyl-L-ornithine from L-glutamate: step 3/4. Its function is as follows. Catalyzes the NADPH-dependent reduction of N-acetyl-5-glutamyl phosphate to yield N-acetyl-L-glutamate 5-semialdehyde. The chain is N-acetyl-gamma-glutamyl-phosphate reductase from Prochlorococcus marinus (strain AS9601).